The following is a 430-amino-acid chain: MKQALRVAFGFLILWASVLHAEVRIVIDSGVDSGRPIGVVPFQWAGPGAAPEDIGGIVAADLRNSGKFNPLDRARLPQQPGSAQEVQPAAWSALGIDAVVVGQVTPNPDGSYNVAYQLVDTGGAPGTVLAQNSYKVNKQWLRYASHTASDEVFEKLTGIKGAFRTRIAYVVQTNGGQFPYELRVSDYDGYNQFVVHRSPQPLMSPAWSPDGSKLAYVTFESGRSALVIQTLANGAVRQVASFPRHNGAPAFSPDGSKLAFALSKTGSLNLYVMDLASGQIRQVTDGRSNNTEPTWFPDSQNLAFTSDQAGRPQVYKVNINGGAPQRITWEGSQNQDADVSSDGKFMVMVSSNGGQQHIAKQDLATGGVQVLSSTFLDETPSLAPNGTMVIYSSSQGMGSVLNLVSTDGRFKARLPATDGQVKFPAWSPYL.

An N-terminal signal peptide occupies residues 1–21; the sequence is MKQALRVAFGFLILWASVLHA.

The protein belongs to the TolB family. The Tol-Pal system is composed of five core proteins: the inner membrane proteins TolA, TolQ and TolR, the periplasmic protein TolB and the outer membrane protein Pal. They form a network linking the inner and outer membranes and the peptidoglycan layer.

It localises to the periplasm. Its function is as follows. Part of the Tol-Pal system, which plays a role in outer membrane invagination during cell division and is important for maintaining outer membrane integrity. TolB occupies a key intermediary position in the Tol-Pal system because it communicates directly with both membrane-embedded components, Pal in the outer membrane and TolA in the inner membrane. This Shigella dysenteriae serotype 1 (strain Sd197) protein is Tol-Pal system protein TolB.